The sequence spans 126 residues: RxLR effector protein BLR31 (126 aa).

A signal peptide spans 1–22 (MLLSRAISVLALLACIRCGVHA). The RxLR-dEER motif lies at 44-58 (RLLRTSVDFKDSEER).

This sequence belongs to the RxLR effector family.

It is found in the secreted. The protein localises to the host cell. Functionally, secreted effector that triggers a hypersensitive response (HR) in 3 Lactuca saligna accessions (CGN05947, CGN05310, CGN05304). In Bremia lactucae (Lettuce downy mildew), this protein is RxLR effector protein BLR31.